A 387-amino-acid chain; its full sequence is 3-ketoacyl-CoA thiolase (387 aa).

C91 serves as the catalytic Acyl-thioester intermediate. Catalysis depends on proton acceptor residues H343 and C373.

This sequence belongs to the thiolase-like superfamily. Thiolase family. As to quaternary structure, heterotetramer of two alpha chains (FadB) and two beta chains (FadA).

The protein resides in the cytoplasm. The enzyme catalyses an acyl-CoA + acetyl-CoA = a 3-oxoacyl-CoA + CoA. The protein operates within lipid metabolism; fatty acid beta-oxidation. Its function is as follows. Catalyzes the final step of fatty acid oxidation in which acetyl-CoA is released and the CoA ester of a fatty acid two carbons shorter is formed. This Yersinia pseudotuberculosis serotype O:1b (strain IP 31758) protein is 3-ketoacyl-CoA thiolase.